A 488-amino-acid polypeptide reads, in one-letter code: Probable multidrug resistance protein NorM (488 aa).

12 helical membrane passes run 11–31, 55–75, 97–117, 127–147, 159–179, 190–210, 247–267, 271–291, 317–337, 355–375, 393–413, and 421–441; these read AILR…AMVF, YAFV…LVAI, AALA…LLVF, AMQF…FMVL, PVMA…YSFI, LAGI…LLAL, GTYA…GIIG, LAAH…PVGL, VGIG…WWMP, VAAM…FDGT, FLVG…LLAF, and GVWW…TLAF.

It belongs to the multi antimicrobial extrusion (MATE) (TC 2.A.66.1) family.

The protein localises to the cell inner membrane. Its function is as follows. Multidrug efflux pump. The sequence is that of Probable multidrug resistance protein NorM (norM) from Pseudomonas aeruginosa (strain ATCC 15692 / DSM 22644 / CIP 104116 / JCM 14847 / LMG 12228 / 1C / PRS 101 / PAO1).